A 309-amino-acid chain; its full sequence is Malate dehydrogenase (309 aa).

NAD(+) contacts are provided by residues 7–12 (GAGHVG) and Asp32. Residues Arg81 and Arg87 each contribute to the substrate site. NAD(+) contacts are provided by residues Asn94 and 117–119 (VSN). Substrate contacts are provided by Asn119 and Arg150. His174 (proton acceptor) is an active-site residue.

The protein belongs to the LDH/MDH superfamily. MDH type 3 family.

It catalyses the reaction (S)-malate + NAD(+) = oxaloacetate + NADH + H(+). Its function is as follows. Catalyzes the reversible oxidation of malate to oxaloacetate. The chain is Malate dehydrogenase from Chlorobium phaeovibrioides (strain DSM 265 / 1930) (Prosthecochloris vibrioformis (strain DSM 265)).